Here is a 311-residue protein sequence, read N- to C-terminus: Protoheme IX farnesyltransferase (311 aa).

The next 9 helical transmembrane spans lie at 32 to 52, 53 to 73, 104 to 124, 125 to 145, 153 to 173, 180 to 200, 224 to 244, 245 to 265, and 290 to 310; these read VMSL…VSIN, PWYG…AGVL, FVFG…FINW, FAAL…TIWL, IVIG…AATG, FLLF…LSLF, KQIL…FIID, FAGI…IYFA, and FYLA…YFII.

Belongs to the UbiA prenyltransferase family. Protoheme IX farnesyltransferase subfamily.

It is found in the cell inner membrane. It catalyses the reaction heme b + (2E,6E)-farnesyl diphosphate + H2O = Fe(II)-heme o + diphosphate. The protein operates within porphyrin-containing compound metabolism; heme O biosynthesis; heme O from protoheme: step 1/1. In terms of biological role, converts heme B (protoheme IX) to heme O by substitution of the vinyl group on carbon 2 of heme B porphyrin ring with a hydroxyethyl farnesyl side group. In Bartonella quintana (strain Toulouse) (Rochalimaea quintana), this protein is Protoheme IX farnesyltransferase.